A 383-amino-acid polypeptide reads, in one-letter code: Glycoprotein gp2 (383 aa).

The first 25 residues, 1–25 (MGFIYARKLLLCMAVSIYAIGSTTT), serve as a signal peptide directing secretion. Positions 24–75 (TTTETTTSSSSTSGSGQSTSSGTTNSSSSPTTSPPTTSSSPPTSTHTSSPST) are enriched in low complexity. The interval 24–136 (TTTETTTSSS…RNNSIEIVPQ (113 aa)) is disordered. Residue N48 is glycosylated (N-linked (GlcNAc...) asparagine; by host). The span at 81–91 (HAGHHRGRAGG) shows a compositional bias: basic residues. The N-linked (GlcNAc...) asparagine; by host glycan is linked to N128. A helical transmembrane segment spans residues 354 to 371 (LVAATTLTVTILCLLCCL).

It localises to the virion membrane. Its function is as follows. The glycoprotein gp2 from the avirulent strain Kentucky A (KyA) is probably non functional since this strain harbors an in-frame deletion of 1,242 nucleotides in gene 71. This is Glycoprotein gp2 (US4) from Equus caballus (Horse).